The following is a 339-amino-acid chain: DNA-directed RNA polymerase subunit alpha (339 aa).

The alpha N-terminal domain (alpha-NTD) stretch occupies residues 1-238 (MVDPIVTKNW…EQLSIFINFD (238 aa)). Residues 250–339 (VEEQKLNENL…KAAPQGAPKV (90 aa)) form an alpha C-terminal domain (alpha-CTD) region.

Belongs to the RNA polymerase alpha chain family. In terms of assembly, homodimer. The RNAP catalytic core consists of 2 alpha, 1 beta, 1 beta' and 1 omega subunit. When a sigma factor is associated with the core the holoenzyme is formed, which can initiate transcription.

It carries out the reaction RNA(n) + a ribonucleoside 5'-triphosphate = RNA(n+1) + diphosphate. Its function is as follows. DNA-dependent RNA polymerase catalyzes the transcription of DNA into RNA using the four ribonucleoside triphosphates as substrates. This chain is DNA-directed RNA polymerase subunit alpha, found in Anaeromyxobacter dehalogenans (strain 2CP-C).